Reading from the N-terminus, the 217-residue chain is MDTSRVYGNVKTFRSPGHKQASFPSLSTDACRCPHWHHLALKLGCATLILLLLTLIGLSVFVRFLVQKPLIEKCSMAAQENGTEPTGRSAILECPRHWQPHRNKCLIISQISRPWAEGLVACSMKEATLLIIENEEELKFVQNILKGRQQLFFIGLNYVQTEMTWKWINGSVLKPNILRITGSEVENSCALISHTEVFSDSCSSDNHWICQKTLKHV.

At 1–45 the chain is on the cytoplasmic side; sequence MDTSRVYGNVKTFRSPGHKQASFPSLSTDACRCPHWHHLALKLGC. An LCK-binding motif motif is present at residues 31–34; the sequence is CRCP. A helical; Signal-anchor for type II membrane protein transmembrane segment spans residues 46–66; sequence ATLILLLLTLIGLSVFVRFLV. At 67–217 the chain is on the extracellular side; it reads QKPLIEKCSM…WICQKTLKHV (151 aa). The 111-residue stretch at 101–211 folds into the C-type lectin domain; it reads HRNKCLIISQ…CSSDNHWICQ (111 aa). Intrachain disulfides connect Cys-122-Cys-210 and Cys-189-Cys-202.

As to expression, expressed in natural killer cells and a subset of T-cells.

Its subcellular location is the membrane. Its function is as follows. Binds CLEC2I/Clr-g leading to activation of natural killer cells or stimulation of IL-2 production and proliferation of T-cells in response to antigen stimulation. May contribute to the formation of the immunological synapse between T-cells and antigen-presenting dendritic cells. The chain is Killer cell lectin-like receptor subfamily B member 1F from Rattus norvegicus (Rat).